Consider the following 249-residue polypeptide: Aliphatic sulfonates import ATP-binding protein SsuB 2 (249 aa).

Residues V15–F231 enclose the ABC transporter domain. G47–S54 serves as a coordination point for ATP.

Belongs to the ABC transporter superfamily. Aliphatic sulfonates importer (TC 3.A.1.17.2) family. As to quaternary structure, the complex is composed of two ATP-binding proteins (SsuB), two transmembrane proteins (SsuC) and a solute-binding protein (SsuA).

Its subcellular location is the cell inner membrane. It catalyses the reaction ATP + H2O + aliphatic sulfonate-[sulfonate-binding protein]Side 1 = ADP + phosphate + aliphatic sulfonateSide 2 + [sulfonate-binding protein]Side 1.. Part of the ABC transporter complex SsuABC involved in aliphatic sulfonates import. Responsible for energy coupling to the transport system. This is Aliphatic sulfonates import ATP-binding protein SsuB 2 from Rhizobium johnstonii (strain DSM 114642 / LMG 32736 / 3841) (Rhizobium leguminosarum bv. viciae).